Reading from the N-terminus, the 98-residue chain is NADH-ubiquinone oxidoreductase chain 4L (98 aa).

A run of 3 helical transmembrane segments spans residues 1-21 (MTPT…GMLT), 29-49 (SLLC…LIAL), and 61-81 (IILL…LVSI).

This sequence belongs to the complex I subunit 4L family. Core subunit of respiratory chain NADH dehydrogenase (Complex I) which is composed of 45 different subunits.

It localises to the mitochondrion inner membrane. It catalyses the reaction a ubiquinone + NADH + 5 H(+)(in) = a ubiquinol + NAD(+) + 4 H(+)(out). Its function is as follows. Core subunit of the mitochondrial membrane respiratory chain NADH dehydrogenase (Complex I) which catalyzes electron transfer from NADH through the respiratory chain, using ubiquinone as an electron acceptor. Part of the enzyme membrane arm which is embedded in the lipid bilayer and involved in proton translocation. The polypeptide is NADH-ubiquinone oxidoreductase chain 4L (MT-ND4L) (Macaca pagensis (Mentawai macaque)).